The following is a 355-amino-acid chain: Mannonate dehydratase (355 aa).

It belongs to the mannonate dehydratase family. Fe(2+) serves as cofactor. The cofactor is Mn(2+).

The catalysed reaction is D-mannonate = 2-dehydro-3-deoxy-D-gluconate + H2O. Its pathway is carbohydrate metabolism; pentose and glucuronate interconversion. Catalyzes the dehydration of D-mannonate. In Brachyspira hyodysenteriae (strain ATCC 49526 / WA1), this protein is Mannonate dehydratase.